Consider the following 94-residue polypeptide: Co-chaperonin GroES (94 aa).

It belongs to the GroES chaperonin family. As to quaternary structure, heptamer of 7 subunits arranged in a ring. Interacts with the chaperonin GroEL.

The protein localises to the cytoplasm. Functionally, together with the chaperonin GroEL, plays an essential role in assisting protein folding. The GroEL-GroES system forms a nano-cage that allows encapsulation of the non-native substrate proteins and provides a physical environment optimized to promote and accelerate protein folding. GroES binds to the apical surface of the GroEL ring, thereby capping the opening of the GroEL channel. This Ehrlichia ruminantium (strain Gardel) protein is Co-chaperonin GroES.